A 506-amino-acid chain; its full sequence is F-box protein At4g02760 (506 aa).

Residues 115-161 (TSWPLLPELTIKVFSMLDTKSLMQASACCTMFNKCAMDRVCYSHIDL) form the F-box domain. Residues 452 to 506 (TFVAEFRSPSPSESDVRSPSPSSSSDSSSSSDSSSSSSSGESSDESGTEEEEDED) form a disordered region. A compositionally biased stretch (low complexity) spans 459–492 (SPSPSESDVRSPSPSSSSDSSSSSDSSSSSSSGE). Residues 493–506 (SSDESGTEEEEDED) are compositionally biased toward acidic residues.

The chain is F-box protein At4g02760 from Arabidopsis thaliana (Mouse-ear cress).